The primary structure comprises 571 residues: MGEGEEGDKFPPKTDEVTQESMKSARQLDFTGGSSDVEHSHSNQASSMAAASIPSPIVTVTRPIITSQAPPTVATPIPPPPQSQGIILHVPIRHPRPESPNSMPRPAGETRDGTPQKKKQCNCKHSRCLKLYCECFASGTYCDGCNCVNCFNNVENEPARRQAVESTLERNPNAFRPKIAASPHGGRDNREEVGDVVMLARHNKGCHCKKSGCLKKYCECFQANILCSENCKCLDCKNFEGSEVRQSLFHGEHSHNLAYLQHANAAITGAIGSSGFASAPPPKRRKGQEIFFNQGTKDSSTHRLGQANNGRTTSSQTGSRAGGNASLGPSKVVYKSLLANIIKPMDVKALCSVLVAVAGEAAKTLTEKRLANQKETSVASSVQDQGHVNNKAEKSGLEDSNADGSKGRSLSPETLALMCDERDTMLMVAASPNCSVEPTSQLPNGQDQVYAEQEKVVLTKFRDCLNRIISCGEVKESNCSMSRMDLDTPVQTTVRIDPVVQQAPVANGVSQTAKQPSQLNTTTPNTSSQTANGVSQTAKQPSQLTTTTTTPNTSSQTHLHKTPALSEKKDL.

5 disordered regions span residues 1–52, 92–119, 293–325, 370–411, and 507–571; these read MGEG…AAAS, IRHP…QKKK, NQGT…GGNA, LANQ…RSLS, and NGVS…KKDL. The span at 7 to 16 shows a compositional bias: basic and acidic residues; the sequence is GDKFPPKTDE. Residues 117–241 enclose the CRC domain; the sequence is KKKQCNCKHS…KCLDCKNFEG (125 aa). Polar residues-rich tracts occupy residues 293–319, 373–388, and 508–539; these read NQGT…QTGS, QKET…QGHV, and GVSQ…QTAK. Positions 540-557 are enriched in low complexity; sequence QPSQLTTTTTTPNTSSQT.

This sequence belongs to the lin-54 family. Ubiquitous but expressed mostly in flowers.

It localises to the nucleus. Functionally, plays a role in development of both male and female reproductive tissues. The protein is Protein tesmin/TSO1-like CXC 6 (TCX6) of Arabidopsis thaliana (Mouse-ear cress).